Consider the following 60-residue polypeptide: Putative SERF-like protein (60 aa).

A compositionally biased stretch (basic and acidic residues) spans 1-53 (MTRGNQRDLARQKNQKKQADLTKGKRTDNLTVEQRKARDAELMREKQKKKEEA). A disordered region spans residues 1–60 (MTRGNQRDLARQKNQKKQADLTKGKRTDNLTVEQRKARDAELMREKQKKKEEAAAAGTSK).

This sequence belongs to the SERF family.

The protein is Putative SERF-like protein of Drosophila melanogaster (Fruit fly).